The primary structure comprises 396 residues: S-adenosylmethionine synthase (396 aa).

An ATP-binding site is contributed by His-16. Asp-18 provides a ligand contact to Mg(2+). Residue Glu-44 coordinates K(+). L-methionine-binding residues include Glu-57 and Gln-100. Residues 100-110 (QSVDIAQGVDR) are flexible loop. ATP is bound by residues 165–167 (DAK), Asp-240, 246–247 (RK), Ala-263, and Lys-267. Asp-240 provides a ligand contact to L-methionine. Residue Lys-271 participates in L-methionine binding.

Belongs to the AdoMet synthase family. In terms of assembly, homotetramer; dimer of dimers. The cofactor is Mg(2+). K(+) serves as cofactor.

It is found in the cytoplasm. It catalyses the reaction L-methionine + ATP + H2O = S-adenosyl-L-methionine + phosphate + diphosphate. The protein operates within amino-acid biosynthesis; S-adenosyl-L-methionine biosynthesis; S-adenosyl-L-methionine from L-methionine: step 1/1. Its function is as follows. Catalyzes the formation of S-adenosylmethionine (AdoMet) from methionine and ATP. The overall synthetic reaction is composed of two sequential steps, AdoMet formation and the subsequent tripolyphosphate hydrolysis which occurs prior to release of AdoMet from the enzyme. This chain is S-adenosylmethionine synthase, found in Pseudomonas savastanoi pv. phaseolicola (strain 1448A / Race 6) (Pseudomonas syringae pv. phaseolicola (strain 1448A / Race 6)).